Consider the following 503-residue polypeptide: UDP-N-acetylmuramoylalanine--D-glutamate ligase (503 aa).

Residue Gly-129–Thr-135 participates in ATP binding.

It belongs to the MurCDEF family.

The protein resides in the cytoplasm. The enzyme catalyses UDP-N-acetyl-alpha-D-muramoyl-L-alanine + D-glutamate + ATP = UDP-N-acetyl-alpha-D-muramoyl-L-alanyl-D-glutamate + ADP + phosphate + H(+). The protein operates within cell wall biogenesis; peptidoglycan biosynthesis. Cell wall formation. Catalyzes the addition of glutamate to the nucleotide precursor UDP-N-acetylmuramoyl-L-alanine (UMA). In Burkholderia cenocepacia (strain HI2424), this protein is UDP-N-acetylmuramoylalanine--D-glutamate ligase.